The primary structure comprises 321 residues: Coproporphyrin III ferrochelatase (321 aa).

Fe(2+) is bound by residues histidine 185 and glutamate 267.

This sequence belongs to the ferrochelatase family.

The protein localises to the cytoplasm. The enzyme catalyses Fe-coproporphyrin III + 2 H(+) = coproporphyrin III + Fe(2+). It participates in porphyrin-containing compound metabolism; protoheme biosynthesis. In terms of biological role, involved in coproporphyrin-dependent heme b biosynthesis. Catalyzes the insertion of ferrous iron into coproporphyrin III to form Fe-coproporphyrin III. This Lacticaseibacillus paracasei (strain ATCC 334 / BCRC 17002 / CCUG 31169 / CIP 107868 / KCTC 3260 / NRRL B-441) (Lactobacillus paracasei) protein is Coproporphyrin III ferrochelatase.